Reading from the N-terminus, the 92-residue chain is Small ribosomal subunit protein uS17 (92 aa).

Belongs to the universal ribosomal protein uS17 family. In terms of assembly, part of the 30S ribosomal subunit.

One of the primary rRNA binding proteins, it binds specifically to the 5'-end of 16S ribosomal RNA. This is Small ribosomal subunit protein uS17 from Cupriavidus necator (strain ATCC 17699 / DSM 428 / KCTC 22496 / NCIMB 10442 / H16 / Stanier 337) (Ralstonia eutropha).